We begin with the raw amino-acid sequence, 673 residues long: Annexin A6 (673 aa).

A2 is subject to N-acetylalanine. S13 bears the Phosphoserine mark. 8 Annexin repeats span residues 20–91, 92–163, 175–247, 251–322, 363–434, 435–506, 521–595, and 599–670; these read FNPS…GLMR, PPAY…VLLQ, DLVQ…AVVK, STAE…KLCG, FNPD…GLMM, PPAH…SLAT, EDAQ…AIVQ, and NKPL…AICG. Phosphotyrosine is present on Y30. An N6-acetyllysine mark is found at K63, K68, K75, and K81. Y201 is subject to Phosphotyrosine. N6-acetyllysine occurs at positions 306, 370, and 418. At S422 the chain carries Phosphoserine. K483 is modified (N6-acetyllysine). At S537 the chain carries Phosphoserine. Position 620 is an N6-acetyllysine (K620).

This sequence belongs to the annexin family. In terms of processing, phosphorylated in response to growth factor stimulation.

The protein resides in the cytoplasm. It localises to the melanosome. Functionally, may associate with CD21. May regulate the release of Ca(2+) from intracellular stores. This is Annexin A6 (ANXA6) from Bos taurus (Bovine).